Here is a 32-residue protein sequence, read N- to C-terminus: Photosystem II reaction center protein T (32 aa).

The chain crosses the membrane as a helical span at residues 3 to 23 (ALVYTFLLIGTLMVIFFAVFF).

This sequence belongs to the PsbT family. In terms of assembly, PSII is composed of 1 copy each of membrane proteins PsbA, PsbB, PsbC, PsbD, PsbE, PsbF, PsbH, PsbI, PsbJ, PsbK, PsbL, PsbM, PsbT, PsbX, PsbY, PsbZ, Psb30/Ycf12, at least 3 peripheral proteins of the oxygen-evolving complex and a large number of cofactors. It forms dimeric complexes.

The protein localises to the plastid. The protein resides in the chloroplast thylakoid membrane. Found at the monomer-monomer interface of the photosystem II (PS II) dimer, plays a role in assembly and dimerization of PSII. PSII is a light-driven water plastoquinone oxidoreductase, using light energy to abstract electrons from H(2)O, generating a proton gradient subsequently used for ATP formation. This is Photosystem II reaction center protein T from Thalassiosira pseudonana (Marine diatom).